The sequence spans 518 residues: Cytochrome P450 3A27 (518 aa).

Residue Cys-447 participates in heme binding.

This sequence belongs to the cytochrome P450 family. Heme is required as a cofactor.

The protein resides in the endoplasmic reticulum membrane. Its subcellular location is the microsome membrane. It catalyses the reaction an organic molecule + reduced [NADPH--hemoprotein reductase] + O2 = an alcohol + oxidized [NADPH--hemoprotein reductase] + H2O + H(+). Functionally, cytochromes P450 are a group of heme-thiolate monooxygenases. In liver microsomes, this enzyme is involved in an NADPH-dependent electron transport pathway. It oxidizes a variety of structurally unrelated compounds, including steroids, fatty acids, and xenobiotics. The protein is Cytochrome P450 3A27 (cyp3a27) of Oncorhynchus mykiss (Rainbow trout).